Here is a 341-residue protein sequence, read N- to C-terminus: Glucokinase (341 aa).

18 to 23 is an ATP binding site; that stretch reads GDIGGT.

It belongs to the bacterial glucokinase family.

The protein localises to the cytoplasm. The catalysed reaction is D-glucose + ATP = D-glucose 6-phosphate + ADP + H(+). This Rhizobium johnstonii (strain DSM 114642 / LMG 32736 / 3841) (Rhizobium leguminosarum bv. viciae) protein is Glucokinase.